Reading from the N-terminus, the 230-residue chain is Ribonuclease 3 (230 aa).

The region spanning 1–134 (MKQLEELLST…FLGALLLDKG (134 aa)) is the RNase III domain. Glu-47 is a binding site for Mg(2+). Asp-51 is a catalytic residue. The Mg(2+) site is built by Asp-120 and Glu-123. Residue Glu-123 is part of the active site. A DRBM domain is found at 160–229 (DYKTCLQEFL…AKNALAQLSE (70 aa)).

Belongs to the ribonuclease III family. Homodimer. Mg(2+) serves as cofactor.

It is found in the cytoplasm. The catalysed reaction is Endonucleolytic cleavage to 5'-phosphomonoester.. In terms of biological role, digests double-stranded RNA. Involved in the processing of primary rRNA transcript to yield the immediate precursors to the large and small rRNAs (23S and 16S). Processes some mRNAs, and tRNAs when they are encoded in the rRNA operon. Processes pre-crRNA and tracrRNA of type II CRISPR loci if present in the organism. The chain is Ribonuclease 3 from Streptococcus pyogenes serotype M49 (strain NZ131).